The sequence spans 397 residues: Acetate kinase (397 aa).

Asparagine 8 lines the Mg(2+) pocket. Residue lysine 15 coordinates ATP. Residue arginine 90 participates in substrate binding. The Proton donor/acceptor role is filled by aspartate 147. Residue 207-211 (HLGAG) participates in ATP binding. Glutamate 382 contacts Mg(2+).

This sequence belongs to the acetokinase family. In terms of assembly, homodimer. Mg(2+) serves as cofactor. It depends on Mn(2+) as a cofactor.

It is found in the cytoplasm. It catalyses the reaction acetate + ATP = acetyl phosphate + ADP. Its pathway is metabolic intermediate biosynthesis; acetyl-CoA biosynthesis; acetyl-CoA from acetate: step 1/2. Catalyzes the formation of acetyl phosphate from acetate and ATP. Can also catalyze the reverse reaction. This chain is Acetate kinase, found in Lactiplantibacillus plantarum (strain ATCC BAA-793 / NCIMB 8826 / WCFS1) (Lactobacillus plantarum).